Here is a 134-residue protein sequence, read N- to C-terminus: Cerato-platanin (134 aa).

An N-terminal signal peptide occupies residues 1-14 (MKFSILPMIASAMA). The interval 18-20 (SYD) is binding of oligomers of N-acetylglucosamine (GlcNAc). Binding of N-acetylglucosamine tetramer (GlcNAc-4) regions lie at residues 31-43 (SVACSNGDHGLMA), 65-68 (GWDS), and 91-95 (DSGRG). Disulfide bonds link Cys-34/Cys-71 and Cys-74/Cys-129. The binding of oligomers of N-acetylglucosamine (GlcNAc) stretch occupies residues 113 to 116 (AGRV).

Belongs to the cerato-platanin family. Monomer.

The protein localises to the secreted. The protein resides in the cell wall. In terms of biological role, phytotoxin which causes production of phytoalexin in platanus acerifolia, platanus occidentalis and platanus orientalis. Induces cell necrosis in tobacco leaves, and in callus cells and leaves of P.acerifolia. Induces reactive oxygen species (ROS) synthesis, nitric oxide (NO) production and mitogen-activated protein kinases (MAPKs) phosphorylation in the leaves of A.thaliana and P.acerifolia. Results in H(2)O(2) production on the epidermis around the stomata, rapid closure of the stomata, reduced photosynthetic and CO(2) assimilation rate, and an increase in a number of volatile organic compound (VOC) emission in A.thaliana leaves. Induces overexpression of genes related to salicylic acid- and ethylene-signaling, camalexin synthesis, ROS production and oxidative stress, and genes of various receptor kinases, and down-regulation of a number of jasmonic acid (JA)-signaling genes in A.thaliana leaves. Renders resistance against C.platani in A.thaliana and P.acerifolia. Renders localised resistance of A.thaliana against infection by virulent foliar pathogens B.cinerea and P.syringae pv. tomato. Binds cellulose analog carboxymethyl cellulose (CMC). Expansin-like protein with probable fungal and plant cell wall loosening activity based on its non-enzymatic cellulose weakening activity in vitro. Increases glucose production by cellulase after pre-incubation of cellulose with this protein. In contrast, according to PubMed:23512479, no synergistic effect with cellulases. May have a structural role in the fungal cell wall based on its ability to bind chitin, but does not bind beta-1,3-glucan. The chain is Cerato-platanin from Ceratocystis fimbriata f. sp. platani.